A 241-amino-acid chain; its full sequence is Caffeoyl-CoA O-methyltransferase (241 aa).

Met-1 bears the Blocked amino end (Met) mark. Position 15 (Lys-15) interacts with substrate. Residues Thr-57, Glu-79, 81 to 82 (GV), Ser-87, Asp-105, and Ala-134 contribute to the S-adenosyl-L-methionine site. Asp-157 is a substrate binding site. Residue Asp-157 coordinates a divalent metal cation. Position 159 (Asp-159) interacts with S-adenosyl-L-methionine. 2 residues coordinate a divalent metal cation: Asp-183 and Asn-184. Asn-188 contributes to the substrate binding site.

It belongs to the class I-like SAM-binding methyltransferase superfamily. Cation-dependent O-methyltransferase family. CCoAMT subfamily. Homodimer. Requires a divalent metal cation as cofactor. Roots and leaves.

The enzyme catalyses (E)-caffeoyl-CoA + S-adenosyl-L-methionine = (E)-feruloyl-CoA + S-adenosyl-L-homocysteine + H(+). Its pathway is aromatic compound metabolism; phenylpropanoid biosynthesis. Methylates caffeoyl-CoA to feruloyl-CoA and 5-hydroxyferuloyl-CoA to sinapoyl-CoA. Plays a role in the synthesis of feruloylated polysaccharides. Involved in the reinforcement of the plant cell wall. Also involved in the responding to wounding or pathogen challenge by the increased formation of cell wall-bound ferulic acid polymers. The sequence is that of Caffeoyl-CoA O-methyltransferase from Petroselinum crispum (Parsley).